The following is a 245-amino-acid chain: Probable proteasome subunit alpha type-2 (245 aa).

The protein belongs to the peptidase T1A family. In terms of assembly, the 26S proteasome consists of a 20S proteasome core and two 19S regulatory subunits. The 20S proteasome core is composed of 28 subunits that are arranged in four stacked rings, resulting in a barrel-shaped structure. The two end rings are each formed by seven alpha subunits, and the two central rings are each formed by seven beta subunits. The catalytic chamber with the active sites is on the inside of the barrel.

The protein localises to the cytoplasm. It localises to the nucleus. Its function is as follows. The proteasome is a multicatalytic proteinase complex which is characterized by its ability to cleave peptides with Arg, Phe, Tyr, Leu, and Glu adjacent to the leaving group at neutral or slightly basic pH. The proteasome has an ATP-dependent proteolytic activity. This is Probable proteasome subunit alpha type-2 (pre8) from Schizosaccharomyces pombe (strain 972 / ATCC 24843) (Fission yeast).